A 345-amino-acid chain; its full sequence is Homeobox protein DBX1 (345 aa).

Disordered stretches follow at residues 55-103 and 241-345; these read PRGS…VSPA and KERE…ITVS. The homeobox DNA-binding region spans 182–241; that stretch reads GMLRRAVFSDVQRKALEKMFQKQKYISKPDRKKLAAKLGLKDSQVKIWFQNRRMKWRNSK. A compositionally biased stretch (basic and acidic residues) spans 300–309; the sequence is DPRHLRDPRL. A compositionally biased stretch (acidic residues) spans 330 to 345; it reads SDSEDDEEGEEEITVS.

Belongs to the H2.0 homeobox family.

It localises to the nucleus. In terms of biological role, could have a role in patterning the central nervous system during embryogenesis. Has a key role in regulating the distinct phenotypic features that distinguish two major classes of ventral interneurons, V0 and V1 neurons. Regulates the transcription factor profile, neurotransmitter phenotype, intraspinal migratory path and axonal trajectory of V0 neurons, features that differentiate them from an adjacent set of V1 neurons. This Bos taurus (Bovine) protein is Homeobox protein DBX1 (DBX1).